The following is a 258-amino-acid chain: Synapse differentiation-inducing gene protein 1 (258 aa).

Over 1-181 (MDGIIEQKSM…NFLMMPPRDH (181 aa)) the chain is Cytoplasmic. A Phosphoserine modification is found at Ser-137. A helical transmembrane segment spans residues 182-202 (LGLSVFSMLCCFWPLGIAAFY). At 203–228 (LSHETNKAVAKGDLHQASTSSRRALF) the chain is on the extracellular side. Positions 229 to 249 (LAVLSITIGTGVYVGVAVALI) form an intramembrane region, helical. The Extracellular portion of the chain corresponds to 250–258 (AYLSKNNHL).

It belongs to the CD225/Dispanin family. As to quaternary structure, homodimer. Interacts with GRIA1 and GRIA2.

It localises to the cell membrane. It is found in the early endosome membrane. The protein localises to the postsynaptic density membrane. The protein resides in the synapse. Its subcellular location is the cell projection. It localises to the dendrite. It is found in the dendritic spine. In terms of biological role, may regulate AMPA receptor content at nascent synapses, and have a role in postsynaptic development and maturation. This Macaca fascicularis (Crab-eating macaque) protein is Synapse differentiation-inducing gene protein 1 (SYNDIG1).